A 118-amino-acid polypeptide reads, in one-letter code: Small ribosomal subunit protein uS13 (118 aa).

Residues 92-118 are disordered; that stretch reads RRGLPVRGQRTKTNARTRKGPRKPIKK.

This sequence belongs to the universal ribosomal protein uS13 family. In terms of assembly, part of the 30S ribosomal subunit. Forms a loose heterodimer with protein S19. Forms two bridges to the 50S subunit in the 70S ribosome.

Located at the top of the head of the 30S subunit, it contacts several helices of the 16S rRNA. In the 70S ribosome it contacts the 23S rRNA (bridge B1a) and protein L5 of the 50S subunit (bridge B1b), connecting the 2 subunits; these bridges are implicated in subunit movement. Contacts the tRNAs in the A and P-sites. This chain is Small ribosomal subunit protein uS13, found in Yersinia pestis.